Consider the following 347-residue polypeptide: MESPASSQPASMPQSKGKSKRKKDLRISCMSKPPAPNPTPPRNLDSRTFITIGDRNFEVEADDLVTISELGRGAYGVVEKVRHAQSGTIMAVKRIRATVNSQEQKRLLMDLDINMRTVDCFYTVTFYGALFREGDVWICMELMDTSLDKFYRKVLDKNMTIPEDILGEIAVSIVRALEHLHSKLSVIHRDVKPSNVLINKEGHVKMCDFGISGYLVDSVAKTMDAGCKPYMAPERINPELNQKGYNVKSDVWSLGITMIEMAILRFPYESWGTPFQQLKQVVEEPSPQLPADRFSPEFVDFTAQCLRKNPAERMSYLELMEHPFFTLHKTKKTDIAAFVKEILGEDS.

At methionine 1 the chain carries N-acetylmethionine. Over residues methionine 1–serine 15 the composition is skewed to low complexity. The segment at methionine 1–serine 46 is disordered. Residues serine 3 and serine 15 each carry the phosphoserine modification. The region spanning leucine 64–phenylalanine 325 is the Protein kinase domain. ATP is bound by residues leucine 70 to valine 78 and lysine 93. The active-site Proton acceptor is aspartate 190. Serine 218 carries the phosphoserine modification. A Phosphothreonine modification is found at threonine 222.

This sequence belongs to the protein kinase superfamily. STE Ser/Thr protein kinase family. MAP kinase kinase subfamily. In terms of assembly, component of a signaling complex containing at least AKAP13, PKN1, MAPK14, ZAK and MAP2K3. Within this complex, AKAP13 interacts directly with PKN1, which in turn recruits MAPK14, MAP2K3 and ZAK. Binds to DYRK1B/MIRK and increases its kinase activity. Part of a complex with MAP3K3, RAC1 and CCM2. Interacts with ARRB1. As to quaternary structure, (Microbial infection) Interacts with Yersinia YopJ. In terms of processing, autophosphorylated. Phosphorylation on Ser-218 and Thr-222 by MAP kinase kinase kinases positively regulates the kinase activity. Phosphorylated by TAOK2. Post-translationally, (Microbial infection) Yersinia YopJ may acetylate Ser/Thr residues, preventing phosphorylation and activation, thus blocking the MAPK signaling pathway. As to expression, abundant expression is seen in the skeletal muscle. It is also widely expressed in other tissues.

The enzyme catalyses L-seryl-[protein] + ATP = O-phospho-L-seryl-[protein] + ADP + H(+). It catalyses the reaction L-threonyl-[protein] + ATP = O-phospho-L-threonyl-[protein] + ADP + H(+). It carries out the reaction L-tyrosyl-[protein] + ATP = O-phospho-L-tyrosyl-[protein] + ADP + H(+). Activated by dual phosphorylation on Ser-218 and Thr-222. In terms of biological role, dual specificity kinase. Is activated by cytokines and environmental stress in vivo. Catalyzes the concomitant phosphorylation of a threonine and a tyrosine residue in the MAP kinase p38. Part of a signaling cascade that begins with the activation of the adrenergic receptor ADRA1B and leads to the activation of MAPK14. The chain is Dual specificity mitogen-activated protein kinase kinase 3 (MAP2K3) from Homo sapiens (Human).